The sequence spans 22 residues: Brevinin-1OKa (22 aa).

A Lysine amide modification is found at Lys-22.

In terms of tissue distribution, expressed by the skin glands.

Its subcellular location is the secreted. Antimicrobial peptide. Active against Gram-negative bacterium E.coli (MIC=12.5 uM) and against Gram-positive bacterium S.aureus (MIC=12.5 uM). This is Brevinin-1OKa from Nidirana okinavana (Kampira Falls frog).